Here is a 474-residue protein sequence, read N- to C-terminus: ERO1-like protein alpha (474 aa).

Residues 1 to 29 (MVSGCCRLDMSSYVSVLVLCSLLLWGSNS) form the signal peptide. Disulfide bonds link C40-C53, C42-C51, C90-C398, C99-C104, C99-C138, C104-C109, C215-C248, and C401-C404. FAD is bound by residues R194, T196, and W207. Positions 259, 262, 294, and 307 each coordinate FAD. N-linked (GlcNAc...) asparagine glycosylation is found at N340 and N391. N430 is a glycosylation site (N-linked (GlcNAc...) asparagine).

Belongs to the EROs family. As to quaternary structure, predominantly monomer. May function both as a monomer and a homodimer. FAD serves as cofactor. In terms of processing, the Cys-99/Cys-104 and Cys-401/Cys-404 disulfide bonds constitute the redox-active center. The Cys-99/Cys-104 disulfide bond may accept electron from protein disulfide isomerase (PDI) and funnel them to the active site disulfide Cys-401/Cys-404.

The protein resides in the endoplasmic reticulum membrane. Its activity is regulated as follows. Enzyme activity is tightly regulated to prevent the accumulation of reactive oxygen species in the endoplasmic reticulum. Reversibly down-regulated by the formation of disulfide bonds between the active site Cys-99 and Cys-138, and between Cys-104 and Cys-109. Glutathione may be required to regulate its activity in the endoplasmic reticulum. Functionally, oxidoreductase involved in disulfide bond formation in the endoplasmic reticulum. Efficiently reoxidizes P4HB/PDI, the enzyme catalyzing protein disulfide formation, in order to allow P4HB to sustain additional rounds of disulfide formation. Following P4HB reoxidation, passes its electrons to molecular oxygen via FAD, leading to the production of reactive oxygen species (ROS) in the cell. Required for the folding of immunoglobulins. The protein is ERO1-like protein alpha of Xenopus tropicalis (Western clawed frog).